The following is a 424-amino-acid chain: Serine--tRNA ligase (424 aa).

232–234 (TAE) provides a ligand contact to L-serine. 263-265 (RSE) contributes to the ATP binding site. Glutamate 286 contacts L-serine. Residue 350 to 353 (EISS) participates in ATP binding. L-serine is bound at residue serine 385.

The protein belongs to the class-II aminoacyl-tRNA synthetase family. Type-1 seryl-tRNA synthetase subfamily. In terms of assembly, homodimer. The tRNA molecule binds across the dimer.

It is found in the cytoplasm. It catalyses the reaction tRNA(Ser) + L-serine + ATP = L-seryl-tRNA(Ser) + AMP + diphosphate + H(+). The enzyme catalyses tRNA(Sec) + L-serine + ATP = L-seryl-tRNA(Sec) + AMP + diphosphate + H(+). It participates in aminoacyl-tRNA biosynthesis; selenocysteinyl-tRNA(Sec) biosynthesis; L-seryl-tRNA(Sec) from L-serine and tRNA(Sec): step 1/1. In terms of biological role, catalyzes the attachment of serine to tRNA(Ser). Is also able to aminoacylate tRNA(Sec) with serine, to form the misacylated tRNA L-seryl-tRNA(Sec), which will be further converted into selenocysteinyl-tRNA(Sec). This chain is Serine--tRNA ligase, found in Latilactobacillus sakei subsp. sakei (strain 23K) (Lactobacillus sakei subsp. sakei).